The following is a 131-amino-acid chain: MITDPISDMLTRIRNAIKVKADKVDIPASRMKIEISKILKEEGFIKSYKIIKDKKQGIIRINLKYTSEGDSVISNLQRISKPGRRVYVSKDEIPHVMGGLGVAILTTSQGVMTDKECRHKGVGGEVICYIW.

Belongs to the universal ribosomal protein uS8 family. Part of the 30S ribosomal subunit. Contacts proteins S5 and S12.

In terms of biological role, one of the primary rRNA binding proteins, it binds directly to 16S rRNA central domain where it helps coordinate assembly of the platform of the 30S subunit. The chain is Small ribosomal subunit protein uS8 from Thermodesulfovibrio yellowstonii (strain ATCC 51303 / DSM 11347 / YP87).